Here is a 443-residue protein sequence, read N- to C-terminus: uncharacterized protein (443 aa).

Residues His164 and Asp386 each act as proton acceptor in the active site.

The protein belongs to the plant acyltransferase family.

This is an uncharacterized protein from Arabidopsis thaliana (Mouse-ear cress).